A 985-amino-acid chain; its full sequence is Translation initiation factor IF-2 (985 aa).

Composition is skewed to basic and acidic residues over residues glutamine 49–serine 58, isoleucine 65–asparagine 89, and valine 99–lysine 113. Positions glutamine 49–aspartate 401 are disordered. Over residues serine 125–threonine 136 the composition is skewed to polar residues. Residues alanine 137–arginine 162 are compositionally biased toward low complexity. Composition is skewed to gly residues over residues proline 180 to arginine 246 and proline 288 to arginine 324. Basic and acidic residues predominate over residues lysine 349 to lysine 377. Residues leucine 378 to histidine 391 show a composition bias toward basic residues. A tr-type G domain is found at leucine 485–lysine 654. Residues glycine 494–threonine 501 form a G1 region. Glycine 494–threonine 501 is a binding site for GTP. The tract at residues glycine 519–histidine 523 is G2. Residues aspartate 540–glycine 543 are G3. GTP-binding positions include aspartate 540–histidine 544 and asparagine 594–aspartate 597. The segment at asparagine 594–aspartate 597 is G4. The tract at residues serine 630–lysine 632 is G5.

It belongs to the TRAFAC class translation factor GTPase superfamily. Classic translation factor GTPase family. IF-2 subfamily.

Its subcellular location is the cytoplasm. Its function is as follows. One of the essential components for the initiation of protein synthesis. Protects formylmethionyl-tRNA from spontaneous hydrolysis and promotes its binding to the 30S ribosomal subunits. Also involved in the hydrolysis of GTP during the formation of the 70S ribosomal complex. The sequence is that of Translation initiation factor IF-2 from Desulforamulus reducens (strain ATCC BAA-1160 / DSM 100696 / MI-1) (Desulfotomaculum reducens).